Reading from the N-terminus, the 457-residue chain is RNA-binding suppressor of PAS kinase protein 1 (457 aa).

An R3H domain is found at 26–88; the sequence is RIFIIELENS…SCVILFKGEN (63 aa). Disordered regions lie at residues 142–181, 195–291, and 406–457; these read IDGNTRTPNSNLTANSNKDQKIEIDDKSSTDLEQERIEKE, LNKS…NGGY, and FQGK…KLNI. A compositionally biased stretch (polar residues) spans 145-158; it reads NTRTPNSNLTANSN. The segment covering 159–181 has biased composition (basic and acidic residues); that stretch reads KDQKIEIDDKSSTDLEQERIEKE. Residue S198 is modified to Phosphoserine. Low complexity predominate over residues 226–247; sequence SNTQTSNGSVSSSSPFNSSVTT. Residues 248–258 show a composition bias toward polar residues; the sequence is IQVNKPQQQFY. Positions 418-435 are enriched in basic and acidic residues; it reads KRSDDSNSNKNEGIRRAS. Phosphoserine occurs at positions 435, 439, and 447. Over residues 443–457 the composition is skewed to basic and acidic residues; it reads RDTDSVEMKFDKLNI.

The protein resides in the cytoplasm. The chain is RNA-binding suppressor of PAS kinase protein 1 (RBS1) from Saccharomyces cerevisiae (strain ATCC 204508 / S288c) (Baker's yeast).